The primary structure comprises 447 residues: Argininosuccinate synthase (447 aa).

Residues 17 to 25 (AFSGGLDTS) and A43 contribute to the ATP site. An L-citrulline-binding site is contributed by Y99. ATP contacts are provided by G129 and T131. L-aspartate contacts are provided by T131, N135, and D136. L-citrulline is bound at residue N135. D136 contacts ATP. R139 and S192 together coordinate L-citrulline. D194 is a binding site for ATP. Residues T201, E203, and E280 each coordinate L-citrulline.

The protein belongs to the argininosuccinate synthase family. Type 2 subfamily. Homotetramer.

The protein localises to the cytoplasm. The catalysed reaction is L-citrulline + L-aspartate + ATP = 2-(N(omega)-L-arginino)succinate + AMP + diphosphate + H(+). It participates in amino-acid biosynthesis; L-arginine biosynthesis; L-arginine from L-ornithine and carbamoyl phosphate: step 2/3. The sequence is that of Argininosuccinate synthase from Salmonella paratyphi B (strain ATCC BAA-1250 / SPB7).